A 110-amino-acid chain; its full sequence is Large ribosomal subunit protein uL22 (110 aa).

It belongs to the universal ribosomal protein uL22 family. As to quaternary structure, part of the 50S ribosomal subunit.

Its function is as follows. This protein binds specifically to 23S rRNA; its binding is stimulated by other ribosomal proteins, e.g. L4, L17, and L20. It is important during the early stages of 50S assembly. It makes multiple contacts with different domains of the 23S rRNA in the assembled 50S subunit and ribosome. Functionally, the globular domain of the protein is located near the polypeptide exit tunnel on the outside of the subunit, while an extended beta-hairpin is found that lines the wall of the exit tunnel in the center of the 70S ribosome. The chain is Large ribosomal subunit protein uL22 from Paraburkholderia phytofirmans (strain DSM 17436 / LMG 22146 / PsJN) (Burkholderia phytofirmans).